The sequence spans 445 residues: Ribulose bisphosphate carboxylase large chain (445 aa).

Positions 89 and 139 each coordinate substrate. Catalysis depends on K141, which acts as the Proton acceptor. Position 143 (K143) interacts with substrate. Mg(2+) contacts are provided by K167, D169, and E170. An N6-carboxylysine modification is found at K167. Residue H260 is the Proton acceptor of the active site. The substrate site is built by R261, H293, and S345.

This sequence belongs to the RuBisCO large chain family. Type I subfamily. In terms of assembly, heterohexadecamer of 8 large chains and 8 small chains; disulfide-linked. The disulfide link is formed within the large subunit homodimers. Mg(2+) is required as a cofactor. The disulfide bond which can form in the large chain dimeric partners within the hexadecamer appears to be associated with oxidative stress and protein turnover.

It localises to the plastid. It is found in the chloroplast. It catalyses the reaction 2 (2R)-3-phosphoglycerate + 2 H(+) = D-ribulose 1,5-bisphosphate + CO2 + H2O. It carries out the reaction D-ribulose 1,5-bisphosphate + O2 = 2-phosphoglycolate + (2R)-3-phosphoglycerate + 2 H(+). In terms of biological role, ruBisCO catalyzes two reactions: the carboxylation of D-ribulose 1,5-bisphosphate, the primary event in carbon dioxide fixation, as well as the oxidative fragmentation of the pentose substrate in the photorespiration process. Both reactions occur simultaneously and in competition at the same active site. The chain is Ribulose bisphosphate carboxylase large chain from Callicarpa dichotoma (Purple beautyberry).